A 144-amino-acid chain; its full sequence is Transcriptional regulator SlyA (144 aa).

An HTH marR-type domain is found at 2–135 (ESPLGSDLSR…LSQMISKLEK (134 aa)). A DNA-binding region (H-T-H motif) is located at residues 49 to 72 (QIQLAKAIGIEQPSLVRTLDQLEE).

The protein belongs to the SlyA family. As to quaternary structure, homodimer.

Functionally, transcription regulator that can specifically activate or repress expression of target genes. The sequence is that of Transcriptional regulator SlyA from Wigglesworthia glossinidia brevipalpis.